The sequence spans 217 residues: MSDKKAPNVLSGRFRGYYPVVIDVETGGFNAKTDALLEIAAVTLEMDGEGWLTPGESLHFHIEPFEGANLEPAALEFTGIDPLNPLRGAVSEYEALHAIFKMVRKGIKNNHCNRAIIVAHNANFDHSFVMAATERTGLKRNPFHPFATFDTAALGGLVLGQTILAKACITAGIPFDNNQAHSALYDTDRTAELFCEMVNRWKQLGGWPLTTTAEKTG.

In terms of domain architecture, Exonuclease spans Val-20–Phe-194. Mg(2+) contacts are provided by Asp-23, Glu-25, His-181, and Asp-186. Catalysis depends on His-181, which acts as the Proton donor/acceptor.

The protein belongs to the RNase T family. In terms of assembly, homodimer. Mg(2+) is required as a cofactor.

Functionally, trims short 3' overhangs of a variety of RNA species, leaving a one or two nucleotide 3' overhang. Responsible for the end-turnover of tRNA: specifically removes the terminal AMP residue from uncharged tRNA (tRNA-C-C-A). Also appears to be involved in tRNA biosynthesis. The polypeptide is Ribonuclease T (Photorhabdus laumondii subsp. laumondii (strain DSM 15139 / CIP 105565 / TT01) (Photorhabdus luminescens subsp. laumondii)).